The following is a 463-amino-acid chain: L-seryl-tRNA(Sec) selenium transferase (463 aa).

The residue at position 295 (Lys295) is an N6-(pyridoxal phosphate)lysine.

It belongs to the SelA family. As to quaternary structure, homodecamer; pentamer of dimers. Binds only one seryl-tRNA(Sec) per dimer. The cofactor is pyridoxal 5'-phosphate.

It is found in the cytoplasm. The enzyme catalyses L-seryl-tRNA(Sec) + selenophosphate + H(+) = L-selenocysteinyl-tRNA(Sec) + phosphate. It participates in aminoacyl-tRNA biosynthesis; selenocysteinyl-tRNA(Sec) biosynthesis; selenocysteinyl-tRNA(Sec) from L-seryl-tRNA(Sec) (bacterial route): step 1/1. Functionally, converts seryl-tRNA(Sec) to selenocysteinyl-tRNA(Sec) required for selenoprotein biosynthesis. The protein is L-seryl-tRNA(Sec) selenium transferase of Salmonella enteritidis PT4 (strain P125109).